The primary structure comprises 336 residues: NADH-quinone oxidoreductase subunit H (336 aa).

The next 8 helical transmembrane spans lie at 17-37, 85-105, 116-136, 154-174, 190-210, 247-267, 274-294, and 309-329; these read WFII…TYAI, ALFT…LAVM, LGIG…GVIT, AAQM…IVLL, VWNI…AQAE, VYMF…WLPI, IPGI…QFWI, and FAWK…AVVV.

This sequence belongs to the complex I subunit 1 family. In terms of assembly, NDH-1 is composed of 14 different subunits. Subunits NuoA, H, J, K, L, M, N constitute the membrane sector of the complex.

The protein resides in the cell membrane. It carries out the reaction a quinone + NADH + 5 H(+)(in) = a quinol + NAD(+) + 4 H(+)(out). In terms of biological role, NDH-1 shuttles electrons from NADH, via FMN and iron-sulfur (Fe-S) centers, to quinones in the respiratory chain. The immediate electron acceptor for the enzyme in this species is believed to be ubiquinone. Couples the redox reaction to proton translocation (for every two electrons transferred, four hydrogen ions are translocated across the cytoplasmic membrane), and thus conserves the redox energy in a proton gradient. This subunit may bind ubiquinone. This Brevibacillus brevis (strain 47 / JCM 6285 / NBRC 100599) protein is NADH-quinone oxidoreductase subunit H.